A 155-amino-acid chain; its full sequence is RNA pyrophosphohydrolase (155 aa).

The Nudix hydrolase domain occupies 6–148; sequence GYRANVAIVL…KQDVYRRALT (143 aa). The Nudix box signature appears at 38 to 59; sequence GGVATGETPLQAMYRELYEEVG.

This sequence belongs to the Nudix hydrolase family. RppH subfamily. Requires a divalent metal cation as cofactor.

Accelerates the degradation of transcripts by removing pyrophosphate from the 5'-end of triphosphorylated RNA, leading to a more labile monophosphorylated state that can stimulate subsequent ribonuclease cleavage. This chain is RNA pyrophosphohydrolase, found in Francisella philomiragia subsp. philomiragia (strain ATCC 25017 / CCUG 19701 / FSC 153 / O#319-036).